Consider the following 331-residue polypeptide: Autoinducer 2 import system permease protein LsrD (331 aa).

10 helical membrane passes run 7 to 27 (YGWE…FGLS), 45 to 65 (ICIG…GIDI), 67 to 87 (FGST…AGVP), 90 to 110 (IAIP…AGLI), 118 to 138 (LVIT…LSGI), 162 to 182 (LLGL…FWLL), 212 to 232 (TLCL…VLLV), 240 to 260 (SDLG…GGAN), 261 to 281 (IYGG…VGYL), and 288 to 308 (IGTP…LVVV).

It belongs to the binding-protein-dependent transport system permease family. AraH/RbsC subfamily. As to quaternary structure, the complex is composed of two ATP-binding proteins (LsrA), two transmembrane proteins (LsrC and LsrD) and a solute-binding protein (LsrB).

It localises to the cell inner membrane. In terms of biological role, part of the ABC transporter complex LsrABCD involved in autoinducer 2 (AI-2) import. Probably responsible for the translocation of the substrate across the membrane. The chain is Autoinducer 2 import system permease protein LsrD (lsrD) from Yersinia enterocolitica serotype O:8 / biotype 1B (strain NCTC 13174 / 8081).